Reading from the N-terminus, the 245-residue chain is Transcriptional activator protein ExpR (245 aa).

The 66-residue stretch at 173–238 folds into the HTH luxR-type domain; sequence RSNDKDIFSQ…HAIRLGIELQ (66 aa). The segment at residues 197–216 is a DNA-binding region (H-T-H motif); sequence YQEIALILDIKTGTVKFHIG.

It belongs to the autoinducer-regulated transcriptional regulatory protein family.

Functions as an OHLL responsive transcriptional regulator that acts in virulence (soft rot disease) through the activation of genes for plant tissue macerating enzymes. This chain is Transcriptional activator protein ExpR (expR), found in Pectobacterium parmentieri.